A 199-amino-acid chain; its full sequence is Probable nicotinate-nucleotide adenylyltransferase (199 aa).

It belongs to the NadD family.

It catalyses the reaction nicotinate beta-D-ribonucleotide + ATP + H(+) = deamido-NAD(+) + diphosphate. The protein operates within cofactor biosynthesis; NAD(+) biosynthesis; deamido-NAD(+) from nicotinate D-ribonucleotide: step 1/1. In terms of biological role, catalyzes the reversible adenylation of nicotinate mononucleotide (NaMN) to nicotinic acid adenine dinucleotide (NaAD). This Rhizobium johnstonii (strain DSM 114642 / LMG 32736 / 3841) (Rhizobium leguminosarum bv. viciae) protein is Probable nicotinate-nucleotide adenylyltransferase.